The sequence spans 872 residues: Alanine--tRNA ligase (872 aa).

Residues His567, His571, Cys669, and His673 each coordinate Zn(2+).

Belongs to the class-II aminoacyl-tRNA synthetase family. It depends on Zn(2+) as a cofactor.

The protein resides in the cytoplasm. It catalyses the reaction tRNA(Ala) + L-alanine + ATP = L-alanyl-tRNA(Ala) + AMP + diphosphate. Its function is as follows. Catalyzes the attachment of alanine to tRNA(Ala) in a two-step reaction: alanine is first activated by ATP to form Ala-AMP and then transferred to the acceptor end of tRNA(Ala). Also edits incorrectly charged Ser-tRNA(Ala) and Gly-tRNA(Ala) via its editing domain. This chain is Alanine--tRNA ligase, found in Streptococcus suis (strain 98HAH33).